The sequence spans 535 residues: Cytochrome c oxidase subunit 1 (535 aa).

A helical membrane pass occupies residues I17 to I37. Residues E40, A43, and G45 each contribute to the Ca(2+) site. 6 consecutive transmembrane segments (helical) span residues V58–G78, F104–A124, L147–I167, P184–L204, L236–I256, and V268–V288. Residue H63 coordinates Fe(II)-heme a. Residue H242 participates in Cu cation binding. Positions H242–Y246 form a cross-link, 1'-histidyl-3'-tyrosine (His-Tyr). Y246 is a binding site for O2. Residues H291 and H292 each contribute to the Cu cation site. Transmembrane regions (helical) follow at residues M311–G331 and M339–L359. Residues H369 and D370 each coordinate Mg(2+). The next 2 helical transmembrane spans lie at Y373–G393 and I413–G433. Position 377 (H377) interacts with heme a3. H379 is a binding site for Fe(II)-heme a. A Ca(2+)-binding site is contributed by P442. A helical membrane pass occupies residues Y453 to I473.

Belongs to the heme-copper respiratory oxidase family. As to quaternary structure, component of the cytochrome c oxidase (complex IV, CIV), a multisubunit enzyme composed of a catalytic core of 3 subunits and several supernumerary subunits. The complex exists as a monomer or a dimer and forms supercomplexes (SCs) in the inner mitochondrial membrane with ubiquinol-cytochrome c oxidoreductase (cytochrome b-c1 complex, complex III, CIII). It depends on heme as a cofactor. Cu cation is required as a cofactor.

Its subcellular location is the mitochondrion inner membrane. It carries out the reaction 4 Fe(II)-[cytochrome c] + O2 + 8 H(+)(in) = 4 Fe(III)-[cytochrome c] + 2 H2O + 4 H(+)(out). It functions in the pathway energy metabolism; oxidative phosphorylation. Functionally, component of the cytochrome c oxidase, the last enzyme in the mitochondrial electron transport chain which drives oxidative phosphorylation. The respiratory chain contains 3 multisubunit complexes succinate dehydrogenase (complex II, CII), ubiquinol-cytochrome c oxidoreductase (cytochrome b-c1 complex, complex III, CIII) and cytochrome c oxidase (complex IV, CIV), that cooperate to transfer electrons derived from NADH and succinate to molecular oxygen, creating an electrochemical gradient over the inner membrane that drives transmembrane transport and the ATP synthase. Cytochrome c oxidase is the component of the respiratory chain that catalyzes the reduction of oxygen to water. Electrons originating from reduced cytochrome c in the intermembrane space (IMS) are transferred via the dinuclear copper A center (CU(A)) of subunit 2 and heme A of subunit 1 to the active site in subunit 1, a binuclear center (BNC) formed by heme A3 and copper B (CU(B)). The BNC reduces molecular oxygen to 2 water molecules using 4 electrons from cytochrome c in the IMS and 4 protons from the mitochondrial matrix. This Wickerhamomyces canadensis (Yeast) protein is Cytochrome c oxidase subunit 1 (COX1).